A 147-amino-acid chain; its full sequence is Nucleoside diphosphate kinase (147 aa).

ATP contacts are provided by Lys9, Phe57, Arg85, Thr91, Arg102, and Asn112. His115 acts as the Pros-phosphohistidine intermediate in catalysis.

Belongs to the NDK family. Homotetramer. Mg(2+) serves as cofactor.

The protein localises to the cytoplasm. The enzyme catalyses a 2'-deoxyribonucleoside 5'-diphosphate + ATP = a 2'-deoxyribonucleoside 5'-triphosphate + ADP. The catalysed reaction is a ribonucleoside 5'-diphosphate + ATP = a ribonucleoside 5'-triphosphate + ADP. Functionally, major role in the synthesis of nucleoside triphosphates other than ATP. The ATP gamma phosphate is transferred to the NDP beta phosphate via a ping-pong mechanism, using a phosphorylated active-site intermediate. The chain is Nucleoside diphosphate kinase from Listeria monocytogenes serotype 4b (strain CLIP80459).